A 373-amino-acid chain; its full sequence is Queuine tRNA-ribosyltransferase (373 aa).

Asp-90 acts as the Proton acceptor in catalysis. Residues Asp-90–Phe-94, Asp-144, Gln-193, and Gly-220 contribute to the substrate site. The tract at residues Gly-251 to Asp-257 is RNA binding. Asp-270 (nucleophile) is an active-site residue. Positions Thr-275 to Arg-279 are RNA binding; important for wobble base 34 recognition. Residues Cys-308, Cys-310, Cys-313, and His-339 each coordinate Zn(2+).

The protein belongs to the queuine tRNA-ribosyltransferase family. Homodimer. Within each dimer, one monomer is responsible for RNA recognition and catalysis, while the other monomer binds to the replacement base PreQ1. Requires Zn(2+) as cofactor.

The enzyme catalyses 7-aminomethyl-7-carbaguanine + guanosine(34) in tRNA = 7-aminomethyl-7-carbaguanosine(34) in tRNA + guanine. Its pathway is tRNA modification; tRNA-queuosine biosynthesis. Functionally, catalyzes the base-exchange of a guanine (G) residue with the queuine precursor 7-aminomethyl-7-deazaguanine (PreQ1) at position 34 (anticodon wobble position) in tRNAs with GU(N) anticodons (tRNA-Asp, -Asn, -His and -Tyr). Catalysis occurs through a double-displacement mechanism. The nucleophile active site attacks the C1' of nucleotide 34 to detach the guanine base from the RNA, forming a covalent enzyme-RNA intermediate. The proton acceptor active site deprotonates the incoming PreQ1, allowing a nucleophilic attack on the C1' of the ribose to form the product. After dissociation, two additional enzymatic reactions on the tRNA convert PreQ1 to queuine (Q), resulting in the hypermodified nucleoside queuosine (7-(((4,5-cis-dihydroxy-2-cyclopenten-1-yl)amino)methyl)-7-deazaguanosine). This Campylobacter jejuni subsp. doylei (strain ATCC BAA-1458 / RM4099 / 269.97) protein is Queuine tRNA-ribosyltransferase.